Reading from the N-terminus, the 319-residue chain is Ribosomal RNA large subunit methyltransferase F (319 aa).

A disordered region spans residues 1 to 25 (MAPFFSAMTSKKQSQGLPKGPHPDN). Residues 7-16 (AMTSKKQSQG) show a composition bias toward polar residues.

This sequence belongs to the methyltransferase superfamily. METTL16/RlmF family.

It localises to the cytoplasm. It catalyses the reaction adenosine(1618) in 23S rRNA + S-adenosyl-L-methionine = N(6)-methyladenosine(1618) in 23S rRNA + S-adenosyl-L-homocysteine + H(+). Its function is as follows. Specifically methylates the adenine in position 1618 of 23S rRNA. In Shewanella amazonensis (strain ATCC BAA-1098 / SB2B), this protein is Ribosomal RNA large subunit methyltransferase F.